We begin with the raw amino-acid sequence, 186 residues long: Large ribosomal subunit protein uL10 (186 aa).

In terms of assembly, part of the ribosomal stalk of the 50S ribosomal subunit. The N-terminus interacts with L11 and the large rRNA to form the base of the stalk. The C-terminus forms an elongated spine to which L12 dimers bind in a sequential fashion forming a multimeric L10(L12)X complex.

Functionally, forms part of the ribosomal stalk, playing a central role in the interaction of the ribosome with GTP-bound translation factors. The chain is Large ribosomal subunit protein uL10 from Rhodopseudomonas palustris (strain ATCC BAA-98 / CGA009).